The sequence spans 127 residues: Ribonuclease P protein component (127 aa).

The protein belongs to the RnpA family. Consists of a catalytic RNA component (M1 or rnpB) and a protein subunit.

It carries out the reaction Endonucleolytic cleavage of RNA, removing 5'-extranucleotides from tRNA precursor.. RNaseP catalyzes the removal of the 5'-leader sequence from pre-tRNA to produce the mature 5'-terminus. It can also cleave other RNA substrates such as 4.5S RNA. The protein component plays an auxiliary but essential role in vivo by binding to the 5'-leader sequence and broadening the substrate specificity of the ribozyme. In Prochlorococcus marinus (strain SARG / CCMP1375 / SS120), this protein is Ribonuclease P protein component.